A 552-amino-acid chain; its full sequence is Urocanate hydratase (552 aa).

NAD(+) contacts are provided by residues 50–51 (GG), Q128, 174–176 (GMG), E194, R199, 261–265 (QTSAH), 271–272 (YI), and Y320. C408 is an active-site residue. An NAD(+)-binding site is contributed by G490.

Belongs to the urocanase family. The cofactor is NAD(+).

It localises to the cytoplasm. It catalyses the reaction 4-imidazolone-5-propanoate = trans-urocanate + H2O. The protein operates within amino-acid degradation; L-histidine degradation into L-glutamate; N-formimidoyl-L-glutamate from L-histidine: step 2/3. Functionally, catalyzes the conversion of urocanate to 4-imidazolone-5-propionate. In Bdellovibrio bacteriovorus (strain ATCC 15356 / DSM 50701 / NCIMB 9529 / HD100), this protein is Urocanate hydratase.